We begin with the raw amino-acid sequence, 115 residues long: Movement protein TGB2 (115 aa).

Residues 1–13 lie on the Cytoplasmic side of the membrane; the sequence is MSAQGHRLTAPVN. The chain crosses the membrane as a helical span at residues 14–34; it reads SEKVYIVLGLSFALISITFLL. Topologically, residues 35–74 are lumenal; that stretch reads SRNNLPHVGDNIHSLPHGDAYRDGTKAILYNSPNFGSRTS. The helical transmembrane segment at 75–95 threads the bilayer; that stretch reads LNNSKNAAFAAVLLLSLLIYG. At 96 to 115 the chain is on the cytoplasmic side; it reads SRCLSQRNHLCACGNNHSSN.

This sequence belongs to the Tymovirales TGBp2 protein family.

It localises to the host endoplasmic reticulum membrane. In terms of biological role, plays a role in viral cell-to-cell propagation, by facilitating genome transport to neighboring plant cells through plasmosdesmata,. The protein is Movement protein TGB2 of Potato virus X (strain HB) (PVX).